We begin with the raw amino-acid sequence, 228 residues long: Ribosomal RNA large subunit methyltransferase E (228 aa).

Positions 76, 78, 99, 115, and 139 each coordinate S-adenosyl-L-methionine. The active-site Proton acceptor is the K179.

Belongs to the class I-like SAM-binding methyltransferase superfamily. RNA methyltransferase RlmE family.

The protein resides in the cytoplasm. The catalysed reaction is uridine(2552) in 23S rRNA + S-adenosyl-L-methionine = 2'-O-methyluridine(2552) in 23S rRNA + S-adenosyl-L-homocysteine + H(+). Specifically methylates the uridine in position 2552 of 23S rRNA at the 2'-O position of the ribose in the fully assembled 50S ribosomal subunit. The chain is Ribosomal RNA large subunit methyltransferase E from Nitrobacter hamburgensis (strain DSM 10229 / NCIMB 13809 / X14).